Consider the following 99-residue polypeptide: Putative UPF0320 protein YDR543C (99 aa).

Positions 80-99 (EKSPPKSPKHKNILSFNNNT) are disordered.

It belongs to the UPF0320 family.

The sequence is that of Putative UPF0320 protein YDR543C from Saccharomyces cerevisiae (strain ATCC 204508 / S288c) (Baker's yeast).